Reading from the N-terminus, the 843-residue chain is Proto-oncogene vav (843 aa).

Positions 1 to 119 (MELWRQCTHW…YTLSALSWTP (119 aa)) constitute a Calponin-homology (CH) domain. The DH domain maps to 194 to 373 (KRCCCLREIQ…RDLAQCVNEV (180 aa)). Positions 402-504 (RPKIDGELKI…WMEQFEMAIS (103 aa)) constitute a PH domain. A Phorbol-ester/DAG-type zinc finger spans residues 515–564 (GHDFQMFSFEETTSCKACQMLLRGTFYQGYRCYRCRAPAHKECLGRVPPC). In terms of domain architecture, SH3 1 spans 590–658 (LGLPKMEVCQ…PCNRVRPYVH (69 aa)). The SH2 domain occupies 669 to 763 (WYAGPMERAG…SLDTTLQFPY (95 aa)). The 61-residue stretch at 780-840 (KYFGTAKARY…PSNYVEEDYS (61 aa)) folds into the SH3 2 domain. 2 positions are modified to phosphotyrosine: tyrosine 824 and tyrosine 842.

In terms of assembly, interacts with SHB. Interacts with APS, DOCK2, GRB2, GRB3, DOCK2, SLA, TEC and ZNF655/VIK. Interacts with SIAH2; without leading to its degradation. Associates with BLNK, PLCG1, GRB2 and NCK1 in a B-cell antigen receptor-dependent fashion. Interacts with CBLB; which inhibits tyrosine phosphorylation and down-regulates activity. May interact with CCPG1. Interacts with CLNK. Interacts with THEMIS2. Interacts with NEK3 and this interaction is prolactin-dependent. Interacts with ITK. Interacts with PTK2B/PYK2. Interacts with HCK. Interacts with PTK2B/PYK2. Interacts (via SH2 domain) with SYK. Interacts with ANKRD54. Interacts with CD6. Interacts with LCP2; this interaction plays a role in TCR-mediated cytokine production. Post-translationally, phosphorylated by FYN. Phosphorylated on tyrosine residues by HCK in response to IFNG and bacterial lipopolysaccharide (LPS).

Functionally, couples tyrosine kinase signals with the activation of the Rho/Rac GTPases, thus leading to cell differentiation and/or proliferation. This Rattus norvegicus (Rat) protein is Proto-oncogene vav (Vav1).